A 329-amino-acid polypeptide reads, in one-letter code: DNA-directed RNA polymerase subunit alpha (329 aa).

The interval 1–235 is alpha N-terminal domain (alpha-NTD); the sequence is MVREKVKVST…DLFIPFLHTE (235 aa). The alpha C-terminal domain (alpha-CTD) stretch occupies residues 269–329; it reads IALKYIFIDQ…KQILGILEKK (61 aa).

Belongs to the RNA polymerase alpha chain family. In plastids the minimal PEP RNA polymerase catalytic core is composed of four subunits: alpha, beta, beta', and beta''. When a (nuclear-encoded) sigma factor is associated with the core the holoenzyme is formed, which can initiate transcription.

It is found in the plastid. The protein resides in the chloroplast. The catalysed reaction is RNA(n) + a ribonucleoside 5'-triphosphate = RNA(n+1) + diphosphate. Functionally, DNA-dependent RNA polymerase catalyzes the transcription of DNA into RNA using the four ribonucleoside triphosphates as substrates. This chain is DNA-directed RNA polymerase subunit alpha, found in Gossypium hirsutum (Upland cotton).